The primary structure comprises 151 residues: Large ribosomal subunit protein uL15 (151 aa).

A disordered region spans residues 1-57 (MTLRLDSLKANKGARRRKLRKGRGIAAGQGASCGFGMRGQKSRSGRPTRPGFEGGQM). Positions 12–23 (KGARRRKLRKGR) are enriched in basic residues. Over residues 25 to 37 (IAAGQGASCGFGM) the composition is skewed to gly residues.

The protein belongs to the universal ribosomal protein uL15 family. As to quaternary structure, part of the 50S ribosomal subunit.

In terms of biological role, binds to the 23S rRNA. The sequence is that of Large ribosomal subunit protein uL15 from Synechococcus sp. (strain CC9902).